Reading from the N-terminus, the 73-residue chain is Antitoxin VapB20 (73 aa).

Antitoxin component of a type II toxin-antitoxin (TA) system. Upon expression in E.coli neutralizes the toxic effect of cognate toxin VapC20. In Mycobacterium tuberculosis (strain ATCC 25618 / H37Rv), this protein is Antitoxin VapB20 (vapB20).